Consider the following 143-residue polypeptide: Peptidyl-prolyl cis-trans isomerase B (143 aa).

A PPIase cyclophilin-type domain is found at 1 to 143; the sequence is MKTGYFLLED…DVMKEVRVEG (143 aa).

The protein belongs to the cyclophilin-type PPIase family.

The protein localises to the cytoplasm. It carries out the reaction [protein]-peptidylproline (omega=180) = [protein]-peptidylproline (omega=0). With respect to regulation, inhibited by cyclosporin A (CsA). In terms of biological role, PPIases accelerate the folding of proteins. It catalyzes the cis-trans isomerization of proline imidic peptide bonds in oligopeptides. The polypeptide is Peptidyl-prolyl cis-trans isomerase B (ppiB) (Bacillus subtilis (strain 168)).